The following is a 429-amino-acid chain: Glutamate-1-semialdehyde 2,1-aminomutase 2 (429 aa).

K268 carries the N6-(pyridoxal phosphate)lysine modification.

Belongs to the class-III pyridoxal-phosphate-dependent aminotransferase family. HemL subfamily. Homodimer. Pyridoxal 5'-phosphate serves as cofactor.

Its subcellular location is the cytoplasm. It carries out the reaction (S)-4-amino-5-oxopentanoate = 5-aminolevulinate. It functions in the pathway porphyrin-containing compound metabolism; protoporphyrin-IX biosynthesis; 5-aminolevulinate from L-glutamyl-tRNA(Glu): step 2/2. This chain is Glutamate-1-semialdehyde 2,1-aminomutase 2, found in Staphylococcus aureus (strain MSSA476).